The chain runs to 270 residues: Putative phosphoenolpyruvate synthase regulatory protein (270 aa).

An ADP-binding site is contributed by 150–157; the sequence is GVSRCGKT.

Belongs to the pyruvate, phosphate/water dikinase regulatory protein family. PSRP subfamily.

It carries out the reaction [pyruvate, water dikinase] + ADP = [pyruvate, water dikinase]-phosphate + AMP + H(+). The enzyme catalyses [pyruvate, water dikinase]-phosphate + phosphate + H(+) = [pyruvate, water dikinase] + diphosphate. Functionally, bifunctional serine/threonine kinase and phosphorylase involved in the regulation of the phosphoenolpyruvate synthase (PEPS) by catalyzing its phosphorylation/dephosphorylation. The chain is Putative phosphoenolpyruvate synthase regulatory protein from Shewanella putrefaciens (strain CN-32 / ATCC BAA-453).